Reading from the N-terminus, the 346-residue chain is Golgi-associated RAB2 interactor protein 2 (346 aa).

The disordered stretch occupies residues Thr-275–Phe-346. Basic and acidic residues-rich tracts occupy residues Thr-283 to Pro-297 and Lys-334 to Phe-346.

This sequence belongs to the GARIN family. As to quaternary structure, interacts with CALM1.

It localises to the cell projection. Its subcellular location is the cilium. The protein resides in the flagellum. Seems to play a role in sperm motility. The sequence is that of Golgi-associated RAB2 interactor protein 2 (GARIN2) from Macaca fascicularis (Crab-eating macaque).